Consider the following 561-residue polypeptide: uncharacterized protein (561 aa).

Helical transmembrane passes span phenylalanine 29–isoleucine 49 and phenylalanine 80–isoleucine 100.

The protein resides in the cell membrane. This is an uncharacterized protein from Mycoplasma genitalium (strain ATCC 33530 / DSM 19775 / NCTC 10195 / G37) (Mycoplasmoides genitalium).